Consider the following 357-residue polypeptide: S-adenosylmethionine decarboxylase proenzyme (357 aa).

Catalysis depends on residues E11 and E14. S71 serves as the catalytic Schiff-base intermediate with substrate; via pyruvic acid. S71 carries the pyruvic acid (Ser); by autocatalysis modification. C85 serves as the catalytic Proton donor; for catalytic activity. Active-site proton acceptor; for processing activity residues include S234 and H247.

This sequence belongs to the eukaryotic AdoMetDC family. Pyruvate is required as a cofactor. Post-translationally, is synthesized initially as an inactive proenzyme. Formation of the active enzyme involves a self-maturation process in which the active site pyruvoyl group is generated from an internal serine residue via an autocatalytic post-translational modification. Two non-identical subunits are generated from the proenzyme in this reaction, and the pyruvate is formed at the N-terminus of the alpha chain, which is derived from the carboxyl end of the proenzyme. The post-translation cleavage follows an unusual pathway, termed non-hydrolytic serinolysis, in which the side chain hydroxyl group of the serine supplies its oxygen atom to form the C-terminus of the beta chain, while the remainder of the serine residue undergoes an oxidative deamination to produce ammonia and the pyruvoyl group blocking the N-terminus of the alpha chain.

The catalysed reaction is S-adenosyl-L-methionine + H(+) = S-adenosyl 3-(methylsulfanyl)propylamine + CO2. The protein operates within amine and polyamine biosynthesis; S-adenosylmethioninamine biosynthesis; S-adenosylmethioninamine from S-adenosyl-L-methionine: step 1/1. The polypeptide is S-adenosylmethionine decarboxylase proenzyme (SAMDC) (Catharanthus roseus (Madagascar periwinkle)).